A 435-amino-acid polypeptide reads, in one-letter code: Methylenetetrahydrofolate--tRNA-(uracil-5-)-methyltransferase TrmFO (435 aa).

9–14 is a binding site for FAD; that stretch reads GAGLAG.

The protein belongs to the MnmG family. TrmFO subfamily. FAD is required as a cofactor.

Its subcellular location is the cytoplasm. The enzyme catalyses uridine(54) in tRNA + (6R)-5,10-methylene-5,6,7,8-tetrahydrofolate + NADH + H(+) = 5-methyluridine(54) in tRNA + (6S)-5,6,7,8-tetrahydrofolate + NAD(+). It catalyses the reaction uridine(54) in tRNA + (6R)-5,10-methylene-5,6,7,8-tetrahydrofolate + NADPH + H(+) = 5-methyluridine(54) in tRNA + (6S)-5,6,7,8-tetrahydrofolate + NADP(+). Functionally, catalyzes the folate-dependent formation of 5-methyl-uridine at position 54 (M-5-U54) in all tRNAs. The protein is Methylenetetrahydrofolate--tRNA-(uracil-5-)-methyltransferase TrmFO of Staphylococcus aureus (strain MRSA252).